A 176-amino-acid chain; its full sequence is Shikimate kinase (176 aa).

14-19 (GAGKSS) contacts ATP. A Mg(2+)-binding site is contributed by Ser18. Positions 36, 60, and 82 each coordinate substrate. An ATP-binding site is contributed by Arg120. Arg138 contacts substrate.

Belongs to the shikimate kinase family. In terms of assembly, monomer. Mg(2+) is required as a cofactor.

It localises to the cytoplasm. It catalyses the reaction shikimate + ATP = 3-phosphoshikimate + ADP + H(+). Its pathway is metabolic intermediate biosynthesis; chorismate biosynthesis; chorismate from D-erythrose 4-phosphate and phosphoenolpyruvate: step 5/7. Catalyzes the specific phosphorylation of the 3-hydroxyl group of shikimic acid using ATP as a cosubstrate. In Dehalococcoides mccartyi (strain ATCC BAA-2100 / JCM 16839 / KCTC 5957 / BAV1), this protein is Shikimate kinase.